Reading from the N-terminus, the 163-residue chain is Staphylokinase (163 aa).

The first 27 residues, 1 to 27 (MLKRSLLFLTVLLLLFSFSSITNEVSA), serve as a signal peptide directing secretion.

The protein belongs to the staphylokinase family.

The protein localises to the secreted. Its function is as follows. Potent plasminogen activator that converts plasminogen into plasmin. It forms a 1:1 complex with plasmin, which in turn activates other plasminogen molecules. This chain is Staphylokinase (sak), found in Staphylococcus aureus (strain MW2).